The sequence spans 536 residues: Cytochrome c oxidase subunit 1 (536 aa).

A helical transmembrane segment spans residues 19–39 (IGMTYLGFGMLSAMMGTGMSV). A Ca(2+)-binding site is contributed by glutamate 44. Histidine 67 is a Fe(II)-heme a binding site. A run of 6 helical transmembrane segments spans residues 69–89 (LLMMFFFIMPVWMGAFGNFFL), 103–123 (LNNISFWCLPPALVCMVCSVL), 152–172 (AMFAMHLTSMSSLLGAMNFMV), 188–208 (PLFAWAMFLTAMLLLLSLPVL), 240–260 (LFWFFGHPEVYILMMPGFGVM), and 273–293 (FGEMGMLYAMGSIGFLGFLVW). Position 246 (histidine 246) interacts with Cu cation. Positions 246–250 (HPEVY) form a cross-link, 1'-histidyl-3'-tyrosine (His-Tyr). Tyrosine 250 contacts O2. Residues histidine 295 and histidine 296 each coordinate Cu cation. 2 helical membrane-spanning segments follow: residues 315–335 (MVIAVPTGIKIFSWLATIYGG) and 341–361 (VPMLFALGFLFLFTMGGLTGV). Residues histidine 373 and aspartate 374 each coordinate Mg(2+). A heme a3-binding site is contributed by histidine 381. Residue histidine 383 coordinates Fe(II)-heme a. Transmembrane regions (helical) follow at residues 388–408 (MGALFSLMGAYYYWGPAMFGL) and 418–438 (HFWLLFMSVNVMFLPMHFLGL). Proline 446 is a binding site for Ca(2+). A helical transmembrane segment spans residues 461–481 (MGSAMSVMSVLVGLKSVLVQL).

It belongs to the heme-copper respiratory oxidase family. As to quaternary structure, component of the cytochrome c oxidase (complex IV, CIV), a multisubunit enzyme composed of a catalytic core of 3 subunits and several supernumerary subunits. The complex exists as a monomer or a dimer and forms supercomplexes (SCs) in the inner mitochondrial membrane with ubiquinol-cytochrome c oxidoreductase (cytochrome b-c1 complex, complex III, CIII). Heme serves as cofactor. Requires Cu cation as cofactor.

The protein resides in the mitochondrion inner membrane. The catalysed reaction is 4 Fe(II)-[cytochrome c] + O2 + 8 H(+)(in) = 4 Fe(III)-[cytochrome c] + 2 H2O + 4 H(+)(out). The protein operates within energy metabolism; oxidative phosphorylation. Component of the cytochrome c oxidase, the last enzyme in the mitochondrial electron transport chain which drives oxidative phosphorylation. The respiratory chain contains 3 multisubunit complexes succinate dehydrogenase (complex II, CII), ubiquinol-cytochrome c oxidoreductase (cytochrome b-c1 complex, complex III, CIII) and cytochrome c oxidase (complex IV, CIV), that cooperate to transfer electrons derived from NADH and succinate to molecular oxygen, creating an electrochemical gradient over the inner membrane that drives transmembrane transport and the ATP synthase. Cytochrome c oxidase is the component of the respiratory chain that catalyzes the reduction of oxygen to water. Electrons originating from reduced cytochrome c in the intermembrane space (IMS) are transferred via the dinuclear copper A center (CU(A)) of subunit 2 and heme A of subunit 1 to the active site in subunit 1, a binuclear center (BNC) formed by heme A3 and copper B (CU(B)). The BNC reduces molecular oxygen to 2 water molecules using 4 electrons from cytochrome c in the IMS and 4 protons from the mitochondrial matrix. The chain is Cytochrome c oxidase subunit 1 (COX1) from Debaryomyces hansenii (strain ATCC 36239 / CBS 767 / BCRC 21394 / JCM 1990 / NBRC 0083 / IGC 2968) (Yeast).